We begin with the raw amino-acid sequence, 156 residues long: uncharacterized protein (156 aa).

The signal sequence occupies residues 1-27 (MKLLVLRLILIISTIFVLLNLSCMVNG). 5 N-linked (GlcNAc...) asparagine glycosylation sites follow: N20, N83, N103, N106, and N134.

It localises to the secreted. This is an uncharacterized protein from Dictyostelium discoideum (Social amoeba).